A 336-amino-acid polypeptide reads, in one-letter code: Holliday junction branch migration complex subunit RuvB (336 aa).

The tract at residues 4-184 is large ATPase domain (RuvB-L); the sequence is ADRLISAGAT…FGIVQRLEFY (181 aa). ATP contacts are provided by residues I23, R24, G65, K68, T69, T70, 131–133, R174, Y184, and R221; that span reads EDY. Residue T69 participates in Mg(2+) binding. A small ATPAse domain (RuvB-S) region spans residues 185–255; the sequence is QVPDLQHIVG…IAAQALDMLN (71 aa). Positions 258–336 are head domain (RuvB-H); the sequence is AEGFDYMDRK…HFGITPPEMP (79 aa). DNA is bound by residues R294, R313, and R318.

Belongs to the RuvB family. As to quaternary structure, homohexamer. Forms an RuvA(8)-RuvB(12)-Holliday junction (HJ) complex. HJ DNA is sandwiched between 2 RuvA tetramers; dsDNA enters through RuvA and exits via RuvB. An RuvB hexamer assembles on each DNA strand where it exits the tetramer. Each RuvB hexamer is contacted by two RuvA subunits (via domain III) on 2 adjacent RuvB subunits; this complex drives branch migration. In the full resolvosome a probable DNA-RuvA(4)-RuvB(12)-RuvC(2) complex forms which resolves the HJ.

It is found in the cytoplasm. The enzyme catalyses ATP + H2O = ADP + phosphate + H(+). In terms of biological role, the RuvA-RuvB-RuvC complex processes Holliday junction (HJ) DNA during genetic recombination and DNA repair, while the RuvA-RuvB complex plays an important role in the rescue of blocked DNA replication forks via replication fork reversal (RFR). RuvA specifically binds to HJ cruciform DNA, conferring on it an open structure. The RuvB hexamer acts as an ATP-dependent pump, pulling dsDNA into and through the RuvAB complex. RuvB forms 2 homohexamers on either side of HJ DNA bound by 1 or 2 RuvA tetramers; 4 subunits per hexamer contact DNA at a time. Coordinated motions by a converter formed by DNA-disengaged RuvB subunits stimulates ATP hydrolysis and nucleotide exchange. Immobilization of the converter enables RuvB to convert the ATP-contained energy into a lever motion, pulling 2 nucleotides of DNA out of the RuvA tetramer per ATP hydrolyzed, thus driving DNA branch migration. The RuvB motors rotate together with the DNA substrate, which together with the progressing nucleotide cycle form the mechanistic basis for DNA recombination by continuous HJ branch migration. Branch migration allows RuvC to scan DNA until it finds its consensus sequence, where it cleaves and resolves cruciform DNA. This is Holliday junction branch migration complex subunit RuvB from Salmonella agona (strain SL483).